A 157-amino-acid polypeptide reads, in one-letter code: MELTHFNEEGRARMVEVTEKQETVRTAVAAGEITMRPETLELILDKKVAKGDVLAVAQVAGIMAAKKTGDLIPMCHPLNLTGVDISFTIKVPDTIEAKAKVTCVGKTGVEMEALTAVSVTLLTIYDMVKAVEKGMVIKNIRLLEKTGGKSGDYRREE.

Substrate is bound by residues M74–H76 and M111–E112. D126 is an active-site residue.

It belongs to the MoaC family. Homohexamer; trimer of dimers.

It catalyses the reaction (8S)-3',8-cyclo-7,8-dihydroguanosine 5'-triphosphate = cyclic pyranopterin phosphate + diphosphate. The protein operates within cofactor biosynthesis; molybdopterin biosynthesis. Functionally, catalyzes the conversion of (8S)-3',8-cyclo-7,8-dihydroguanosine 5'-triphosphate to cyclic pyranopterin monophosphate (cPMP). The polypeptide is Cyclic pyranopterin monophosphate synthase (Carboxydothermus hydrogenoformans (strain ATCC BAA-161 / DSM 6008 / Z-2901)).